The following is a 208-amino-acid chain: Attacin-A (208 aa).

A signal peptide spans 1–20; it reads MQSFKICFFISCLSVVLVKG. The propeptide occupies 21–47; that stretch reads QFGGTVSSNPNGGLDVNARLSKTIGDP.

As to expression, hemolymph and fat body.

It localises to the secreted. Its function is as follows. Hemolymph antibacterial protein against Gram-negative bacteria. This is Attacin-A from Glossina morsitans morsitans (Savannah tsetse fly).